The sequence spans 163 residues: Nucleotide-binding protein CKO_02735 (163 aa).

Belongs to the YajQ family.

Its function is as follows. Nucleotide-binding protein. This is Nucleotide-binding protein CKO_02735 from Citrobacter koseri (strain ATCC BAA-895 / CDC 4225-83 / SGSC4696).